A 156-amino-acid chain; its full sequence is Small ribosomal subunit protein uS7 (156 aa).

It belongs to the universal ribosomal protein uS7 family. Part of the 30S ribosomal subunit. Contacts proteins S9 and S11.

One of the primary rRNA binding proteins, it binds directly to 16S rRNA where it nucleates assembly of the head domain of the 30S subunit. Is located at the subunit interface close to the decoding center, probably blocks exit of the E-site tRNA. This Proteus mirabilis (strain HI4320) protein is Small ribosomal subunit protein uS7.